Here is a 453-residue protein sequence, read N- to C-terminus: Putative ABC transporter ATP-binding protein MM_0462 (453 aa).

One can recognise an ABC transporter domain in the interval 4–239 (LETRSLKYSY…QELLKKVGLR (236 aa)). Residue 37 to 44 (GQNGSGKS) participates in ATP binding.

Belongs to the ABC transporter superfamily.

The protein localises to the cell membrane. Functionally, probably part of an ABC transporter complex. Responsible for energy coupling to the transport system. This chain is Putative ABC transporter ATP-binding protein MM_0462, found in Methanosarcina mazei (strain ATCC BAA-159 / DSM 3647 / Goe1 / Go1 / JCM 11833 / OCM 88) (Methanosarcina frisia).